Here is a 200-residue protein sequence, read N- to C-terminus: Recombination protein RecR (200 aa).

The C4-type zinc-finger motif lies at 58-75 (CPCCFCLKNFPESQCEFC). The Toprim domain occupies 82–177 (STLCIVASPK…SISRLALGLP (96 aa)).

This sequence belongs to the RecR family.

Functionally, may play a role in DNA repair. It seems to be involved in an RecBC-independent recombinational process of DNA repair. It may act with RecF and RecO. This is Recombination protein RecR from Chlamydia felis (strain Fe/C-56) (Chlamydophila felis).